A 315-amino-acid chain; its full sequence is Aldo-keto reductase family 4 member C11 (315 aa).

A2 is subject to N-acetylalanine. NADP(+) contacts are provided by residues 23–24 and D47; that span reads TW. Y52 acts as the Proton donor in catalysis. NADP(+) contacts are provided by residues H114, 158 to 159, Q180, 207 to 213, 256 to 258, and 262 to 266; these read SN, SPLGSPG, KST, and RIREN. At S295 the chain carries Phosphoserine.

The protein belongs to the aldo/keto reductase family.

Functionally, oxidoreductase that may act on a broad range of substrates such as ketosteroids, aldehydes, ketones and sugars. This Arabidopsis thaliana (Mouse-ear cress) protein is Aldo-keto reductase family 4 member C11 (AKR4C11).